We begin with the raw amino-acid sequence, 165 residues long: Large ribosomal subunit protein uL10 (165 aa).

2 positions are modified to N6-acetyllysine: K37 and K105.

Belongs to the universal ribosomal protein uL10 family. In terms of assembly, part of the ribosomal stalk of the 50S ribosomal subunit. The N-terminus interacts with L11 and the large rRNA to form the base of the stalk. The C-terminus forms an elongated spine to which L12 dimers bind in a sequential fashion forming a multimeric L10(L12)X complex.

Functionally, protein L10 is also a translational repressor protein. It controls the translation of the rplJL-rpoBC operon by binding to its mRNA. Forms part of the ribosomal stalk, playing a central role in the interaction of the ribosome with GTP-bound translation factors. The polypeptide is Large ribosomal subunit protein uL10 (rplJ) (Escherichia coli O6:H1 (strain CFT073 / ATCC 700928 / UPEC)).